Here is a 467-residue protein sequence, read N- to C-terminus: H(+)/Cl(-) exchange transporter ClcA (467 aa).

Residues 1–30 lie on the Cytoplasmic side of the membrane; that stretch reads MKSQTIPTRRVRGFRRAAVIRQLLSRDKTP. Residues 31–67 form a helical membrane-spanning segment; the sequence is LTILLLASLTGVLAGLAGVAFEKAVAWVTAHRIEGLA. The Periplasmic segment spans residues 68 to 74; that stretch reads QVAHIPW. The helical transmembrane segment at 75–98 threads the bilayer; that stretch reads LVWLLAFLFSALLAMVGYFLVRRF. The Cytoplasmic portion of the chain corresponds to 99–106; sequence APEAGGSG. Residues 104-108 carry the Selectivity filter part_1 motif; the sequence is GSGIP. Serine 105 provides a ligand contact to chloride. An intramembrane region (helical) is located at residues 107–114; the sequence is IPEIEGAL. At 115–121 the chain is on the cytoplasmic side; sequence EELRPVR. A helical membrane pass occupies residues 122–139; that stretch reads WWRVLPVKFFGGMGTLGA. At 140–145 the chain is on the periplasmic side; that stretch reads GMVLGR. Positions 144–148 match the Selectivity filter part_2 motif; sequence GREGP. Residues 146 to 164 form a helical membrane-spanning segment; that stretch reads EGPMVQMGGNIGRMVLDIF. Residues 165-174 lie on the Cytoplasmic side of the membrane; the sequence is HRPDAEARHT. 2 intramembrane regions (helical) span residues 175-187 and 191-199; these read LLAT…LAAA and PLAGILFII. Topologically, residues 200 to 212 are cytoplasmic; the sequence is EEMRTQFHYNLIS. The helical transmembrane segment at 213–230 threads the bilayer; sequence IKAVFTGVIMSTIVFRIF. At 231-250 the chain is on the periplasmic side; sequence NGEKSVIEVGQLTDAPVYTL. The chain crosses the membrane as a helical span at residues 251–279; the sequence is WLYLLLGIIFGAVGPLFNRLVLGMQDVFA. Over 280 to 285 the chain is Cytoplasmic; it reads RIHGGN. Residues 286–307 traverse the membrane as a helical segment; the sequence is TTRWVLLGGAIGGACGLLALWE. Residues 308 to 327 are Periplasmic-facing; it reads PAAAGGGFGLIPIAAAGNFT. A helical transmembrane segment spans residues 328-347; it reads VGMLLFIFIARVVTTVFCFS. The Cytoplasmic segment spans residues 348–352; the sequence is SGAPG. The short motif at 353 to 357 is the Selectivity filter part_3 element; it reads GIFAP. The helical transmembrane segment at 353-374 threads the bilayer; the sequence is GIFAPMLALGTLLGSAFGMACA. Chloride-binding residues include isoleucine 354 and phenylalanine 355. The Periplasmic portion of the chain corresponds to 375 to 384; sequence AWFPQWHLQA. An intramembrane region (helical) is located at residues 385–399; that stretch reads GTFAIAGMGALLAAS. The note=Loop between two helices intramembrane region spans 400 to 402; it reads VRA. The helical intramembrane region spans 403 to 414; it reads PITGIVLVLEMT. Positions 415–419 form an intramembrane region, note=Loop between two helices; the sequence is DNYQL. The helical transmembrane segment at 420-436 threads the bilayer; that stretch reads ILPMIITCLGATLLAQF. Topologically, residues 437-467 are cytoplasmic; that stretch reads LGGKPLYSTILARTLAKQEAERQAQADGRNT. Tyrosine 443 contacts chloride.

Belongs to the chloride channel (TC 2.A.49) family. ClcA subfamily. In terms of assembly, homodimer.

The protein resides in the cell inner membrane. The enzyme catalyses 2 chloride(in) + H(+)(out) = 2 chloride(out) + H(+)(in). Functionally, proton-coupled chloride transporter. Functions as antiport system and exchanges two chloride ions for 1 proton. Probably acts as an electrical shunt for an outwardly-directed proton pump that is linked to amino acid decarboxylation, as part of the extreme acid resistance (XAR) response. In Cronobacter sakazakii (strain ATCC BAA-894) (Enterobacter sakazakii), this protein is H(+)/Cl(-) exchange transporter ClcA.